Here is a 379-residue protein sequence, read N- to C-terminus: MEGGSSSSNGTSYLLAFGENNSGGLCPMTMMPLVTSHHAGHHPINPSNNNNVNTNCLFIPNCSNSTGTPSIMLHNNHNNNKTDDDDNNNNTGLGYYFMESDHHHHHHGNNNNNGSSSSSSSSAVKAKIMAHPHYHRLLAAYVNCQKVGAPPEVVARLEEACASAATMAGGDAAAGSSCIGEDPALDQFMEAYCEMLTKYEQELSKPLKEAMLFLQRIECQFKNLTISSSDFASNEGGDRNGSSEEDVDLHNMIDPQAEDRDLKGQLLRKYSGYLGSLKQEFMKKRKKGKLPKEARQQLLEWWNRHYKWPYPSESQKLALAESTGLDQKQINNWFINQRKRHWKPSEDMQFVVMDPSHPHYYMDNVLGNPFPMDLSHPML.

Residues 75 to 125 (NNHNNNKTDDDDNNNNTGLGYYFMESDHHHHHHGNNNNNGSSSSSSSSAVK) are disordered. The span at 109–122 (NNNNNGSSSSSSSS) shows a compositional bias: low complexity. The region spanning 261–281 (DLKGQLLRKYSGYLGSLKQEF) is the ELK domain. Positions 282–345 (MKKRKKGKLP…NQRKRHWKPS (64 aa)) form a DNA-binding region, homeobox; TALE-type.

It belongs to the TALE/KNOX homeobox family. Expressed mainly in embryonic tissues. Weakly detected in stems and hypocotyl.

Its subcellular location is the nucleus. Possible transcription activator involved in early embryonic development. Probably binds to the DNA sequence 5'-TGAC-3'. The sequence is that of Homeobox protein SBH1 (H1) from Glycine max (Soybean).